Reading from the N-terminus, the 250-residue chain is 2,3-bisphosphoglycerate-dependent phosphoglycerate mutase (250 aa).

Substrate is bound by residues 10–17 (RHGESQWN), 23–24 (TG), Arg-62, 89–92 (ERHY), Lys-100, 116–117 (RR), and 185–186 (GN). Catalysis depends on His-11, which acts as the Tele-phosphohistidine intermediate. Glu-89 acts as the Proton donor/acceptor in catalysis.

Belongs to the phosphoglycerate mutase family. BPG-dependent PGAM subfamily. As to quaternary structure, homodimer.

The catalysed reaction is (2R)-2-phosphoglycerate = (2R)-3-phosphoglycerate. It functions in the pathway carbohydrate degradation; glycolysis; pyruvate from D-glyceraldehyde 3-phosphate: step 3/5. In terms of biological role, catalyzes the interconversion of 2-phosphoglycerate and 3-phosphoglycerate. In Pectobacterium atrosepticum (strain SCRI 1043 / ATCC BAA-672) (Erwinia carotovora subsp. atroseptica), this protein is 2,3-bisphosphoglycerate-dependent phosphoglycerate mutase.